The sequence spans 445 residues: MTERLTNLWPAPLAAQPLNATVTVPGSKSLSNRYLILAALGSKPVTLIGLLRSRDTDLMMGALEALGVRCDVDSATDTTVTVTPPVSGRFHGNVNVFCGLAGTVMRFVPGLALFADGPVNFDGDEQAYARPMKPVLDGLEQLGATVDYHGEVGRLPFTITPPATLPAAQAQVSIDSSGSSQFISGLLLISSKLPGGLHLAHTGEKTPSLPHIRMTVADVTGAGGAVEADESARTWTVEPRAMQLSSKVTVEPDLSNAAPFLGAALIAGGTVRVPHWPETTTQPGGLLPGYLEQMGAEVSFPTIGGVRYCEVTGDGTVRGLGTFDLTAAGEIAPSLAAILVFADKSTDMVGIGHLRGHETNRLEALVNEIRRVGGAAEELPDGLRIEPVPAETLHGAVMETYADHRMATFAAMLGLRIPDIEVINVATTRKTLPDFVGMWSGMLRQ.

3-phosphoshikimate-binding residues include K28, S29, and R33. Position 28 (K28) interacts with phosphoenolpyruvate. G102 and R130 together coordinate phosphoenolpyruvate. 3-phosphoshikimate-binding residues include S179, S180, Q181, E330, and H357. Q181 contacts phosphoenolpyruvate. Residue E330 is the Proton acceptor of the active site. R361, R405, and K430 together coordinate phosphoenolpyruvate.

It belongs to the EPSP synthase family. Monomer.

It localises to the cytoplasm. It carries out the reaction 3-phosphoshikimate + phosphoenolpyruvate = 5-O-(1-carboxyvinyl)-3-phosphoshikimate + phosphate. The protein operates within metabolic intermediate biosynthesis; chorismate biosynthesis; chorismate from D-erythrose 4-phosphate and phosphoenolpyruvate: step 6/7. In terms of biological role, catalyzes the transfer of the enolpyruvyl moiety of phosphoenolpyruvate (PEP) to the 5-hydroxyl of shikimate-3-phosphate (S3P) to produce enolpyruvyl shikimate-3-phosphate and inorganic phosphate. The polypeptide is 3-phosphoshikimate 1-carboxyvinyltransferase (Bifidobacterium longum (strain DJO10A)).